A 612-amino-acid chain; its full sequence is DEAD-box ATP-dependent RNA helicase 11 (612 aa).

Disordered regions lie at residues 1–70 and 83–104; these read MSAS…SGGG and GAGG…WDRR. An N-acetylserine modification is found at S2. 2 stretches are compositionally biased toward gly residues: residues 61-70 and 83-94; these read SGGGGASGGG and GAGGGGGGGGGW. A Q motif motif is present at residues 151–179; the sequence is NTFADIDLGDALNLNIRRCKYVRPTPVQR. In terms of domain architecture, Helicase ATP-binding spans 182–366; sequence IPILLAERDL…ADFMSNYIFL (185 aa). ATP is bound at residue 195–202; it reads AQTGSGKT. The DEAD box signature appears at 310–313; the sequence is DEAD. One can recognise a Helicase C-terminal domain in the interval 377–542; it reads LITQRVEFVQ…EVPEWLTRYA (166 aa). The tract at residues 547-583 is disordered; the sequence is FGGGKKRSGGRFGGRDFRREGSYSRGGGGGGGGGGSD. Over residues 559 to 568 the composition is skewed to basic and acidic residues; the sequence is GGRDFRREGS. The segment covering 570-583 has biased composition (gly residues); sequence SRGGGGGGGGGGSD.

This sequence belongs to the DEAD box helicase family. DDX3/DED1 subfamily.

The catalysed reaction is ATP + H2O = ADP + phosphate + H(+). In Arabidopsis thaliana (Mouse-ear cress), this protein is DEAD-box ATP-dependent RNA helicase 11 (RH11).